We begin with the raw amino-acid sequence, 68 residues long: Large ribosomal subunit protein bL35 (68 aa).

The protein belongs to the bacterial ribosomal protein bL35 family.

This Rickettsia conorii (strain ATCC VR-613 / Malish 7) protein is Large ribosomal subunit protein bL35.